Here is a 380-residue protein sequence, read N- to C-terminus: Cytochrome b (380 aa).

4 helical membrane-spanning segments follow: residues 34–54, 78–99, 114–134, and 179–199; these read FGSL…LLAM, WLIR…YLHI, WNTG…GYVL, and FFAL…IHLT. The heme b site is built by H84 and H98. Heme b is bound by residues H183 and H197. H202 lines the a ubiquinone pocket. 4 helical membrane passes run 227-247, 289-309, 321-341, and 348-368; these read LKDT…ALFS, LGGV…PLLH, LSQL…WVGS, and FIII…ILLP.

This sequence belongs to the cytochrome b family. As to quaternary structure, the cytochrome bc1 complex contains 11 subunits: 3 respiratory subunits (MT-CYB, CYC1 and UQCRFS1), 2 core proteins (UQCRC1 and UQCRC2) and 6 low-molecular weight proteins (UQCRH/QCR6, UQCRB/QCR7, UQCRQ/QCR8, UQCR10/QCR9, UQCR11/QCR10 and a cleavage product of UQCRFS1). This cytochrome bc1 complex then forms a dimer. Heme b is required as a cofactor.

The protein localises to the mitochondrion inner membrane. Its function is as follows. Component of the ubiquinol-cytochrome c reductase complex (complex III or cytochrome b-c1 complex) that is part of the mitochondrial respiratory chain. The b-c1 complex mediates electron transfer from ubiquinol to cytochrome c. Contributes to the generation of a proton gradient across the mitochondrial membrane that is then used for ATP synthesis. The sequence is that of Cytochrome b (MT-CYB) from Fregetta tropica (Black-bellied storm-petrel).